The sequence spans 316 residues: uncharacterized protein (316 aa).

The chain crosses the membrane as a helical span at residues 12-34 (RWVCLTSVILFCFCIAVMRYGGV).

It localises to the membrane. This is an uncharacterized protein from Treponema pallidum (strain Nichols).